We begin with the raw amino-acid sequence, 302 residues long: MDQKRLTHLRQLEAESIHIIREVAAEFANPVMLYSIGKDSSVMLHLARKAFYPGTLPFPLLHVDTGWKFREMYAFRDRTANAYGCELLVHKNPEGVAMGINPFVHGSAKHTDIMKTEGLKQALNKYGFDAAFGGARRDEEKSRAKERIYSFRDRFHRWDPKNQRPELWRNYNGQINKGESIRVFPLSNWTEQDIWQYIWLENIDIVPLYLAAERPVLERDGMLMMVDDDRIDLQPGEVIKKRMVRFRTLGCWPLTGAVESHAQTLPEIIEEMLVSTTSERQGRMIDRDQAGSMELKKRQGYF.

It belongs to the PAPS reductase family. CysD subfamily. In terms of assembly, heterodimer composed of CysD, the smaller subunit, and CysN.

The catalysed reaction is sulfate + ATP + H(+) = adenosine 5'-phosphosulfate + diphosphate. Its pathway is sulfur metabolism; hydrogen sulfide biosynthesis; sulfite from sulfate: step 1/3. In terms of biological role, with CysN forms the ATP sulfurylase (ATPS) that catalyzes the adenylation of sulfate producing adenosine 5'-phosphosulfate (APS) and diphosphate, the first enzymatic step in sulfur assimilation pathway. APS synthesis involves the formation of a high-energy phosphoric-sulfuric acid anhydride bond driven by GTP hydrolysis by CysN coupled to ATP hydrolysis by CysD. This is Sulfate adenylyltransferase subunit 2 from Salmonella agona (strain SL483).